The following is a 226-amino-acid chain: uncharacterized protein (226 aa).

Disordered stretches follow at residues 1–20 (MGAERVGRAPGVNAKRAVQT) and 205–226 (LDRKNTAIAQDKSERKKVQRDA).

This is an uncharacterized protein from Treponema pallidum (strain Nichols).